A 60-amino-acid chain; its full sequence is Adenylate kinase isoenzyme 1 (60 aa).

9–14 lines the ATP pocket; the sequence is GSGKGT. Phosphoserine is present on S25. The segment at 25–53 is NMP; the sequence is STGDLLRVDSSNGFLIDGYPRQGEEFERK. T26 and R31 together coordinate AMP.

The protein belongs to the adenylate kinase family. AK1 subfamily. As to quaternary structure, monomer. Mg(2+) is required as a cofactor.

It localises to the cytoplasm. The catalysed reaction is a ribonucleoside 5'-phosphate + ATP = a ribonucleoside 5'-diphosphate + ADP. The enzyme catalyses AMP + ATP = 2 ADP. It catalyses the reaction dAMP + ATP = dADP + ADP. It carries out the reaction dATP + AMP = dADP + ADP. The catalysed reaction is dAMP + dATP = 2 dADP. The enzyme catalyses a 2'-deoxyribonucleoside 5'-diphosphate + ATP = a 2'-deoxyribonucleoside 5'-triphosphate + ADP. It catalyses the reaction a ribonucleoside 5'-diphosphate + ATP = a ribonucleoside 5'-triphosphate + ADP. It carries out the reaction CDP + GTP = CTP + GDP. The catalysed reaction is GDP + ATP = GTP + ADP. The enzyme catalyses UDP + ATP = UTP + ADP. It catalyses the reaction GTP + UDP = UTP + GDP. It carries out the reaction dTDP + GTP = dTTP + GDP. The catalysed reaction is dCDP + GTP = dCTP + GDP. The enzyme catalyses dGDP + ATP = dGTP + ADP. It catalyses the reaction dADP + GTP = dATP + GDP. It carries out the reaction thiamine diphosphate + ADP = thiamine triphosphate + AMP. Functionally, catalyzes the reversible transfer of the terminal phosphate group between ATP and AMP. Also displays broad nucleoside diphosphate kinase activity. Plays an important role in cellular energy homeostasis and in adenine nucleotide metabolism. Also catalyzes at a very low rate the synthesis of thiamine triphosphate (ThTP) from thiamine diphosphate (ThDP) and ADP. In Mesocricetus auratus (Golden hamster), this protein is Adenylate kinase isoenzyme 1 (Ak1).